Consider the following 430-residue polypeptide: Elongation factor Tu (430 aa).

The 208-residue stretch at 13–220 folds into the tr-type G domain; the sequence is RPHLNIGTIG…ACDKYIALPE (208 aa). A G1 region spans residues 22 to 29; that stretch reads GHVDHGKT. 22–29 contributes to the GTP binding site; the sequence is GHVDHGKT. T29 contributes to the Mg(2+) binding site. The tract at residues 66 to 70 is G2; the sequence is GITIS. Residues 87-90 are G3; that stretch reads DCPG. GTP-binding positions include 87-91 and 142-145; these read DCPGH and NKCD. The interval 142-145 is G4; sequence NKCD. Residues 188 to 190 are G5; that stretch reads SAL.

The protein belongs to the TRAFAC class translation factor GTPase superfamily. Classic translation factor GTPase family. EF-Tu/EF-1A subfamily. As to quaternary structure, monomer.

It is found in the cytoplasm. The catalysed reaction is GTP + H2O = GDP + phosphate + H(+). GTP hydrolase that promotes the GTP-dependent binding of aminoacyl-tRNA to the A-site of ribosomes during protein biosynthesis. This Neorickettsia sennetsu (strain ATCC VR-367 / Miyayama) (Ehrlichia sennetsu) protein is Elongation factor Tu.